We begin with the raw amino-acid sequence, 336 residues long: Foldase protein PrsA (336 aa).

An N-terminal signal peptide occupies residues 1-22 (MKSAKKLLSVLCLGIFILTFTA). The N-palmitoyl cysteine moiety is linked to residue cysteine 23. Cysteine 23 carries the S-diacylglycerol cysteine lipid modification. The PpiC domain maps to 194–286 (PNTMNVSHIL…WGYHIIKINS (93 aa)).

It belongs to the PrsA family.

It is found in the cell membrane. The enzyme catalyses [protein]-peptidylproline (omega=180) = [protein]-peptidylproline (omega=0). In terms of biological role, plays a major role in protein secretion by helping the post-translocational extracellular folding of several secreted proteins. The chain is Foldase protein PrsA from Clostridium botulinum (strain Langeland / NCTC 10281 / Type F).